Consider the following 311-residue polypeptide: HPr kinase/phosphorylase (311 aa).

Residues histidine 138 and lysine 159 contribute to the active site. An ATP-binding site is contributed by glycine 153–serine 160. Serine 160 is a binding site for Mg(2+). Aspartate 177 functions as the Proton acceptor; for phosphorylation activity. Proton donor; for dephosphorylation activity in the catalytic mechanism. Residues isoleucine 201–aspartate 210 form an important for the catalytic mechanism of both phosphorylation and dephosphorylation region. Glutamate 202 lines the Mg(2+) pocket. Arginine 243 is an active-site residue. Residues proline 264–arginine 269 form an important for the catalytic mechanism of dephosphorylation region.

Belongs to the HPrK/P family. Homohexamer. Mg(2+) serves as cofactor.

The enzyme catalyses [HPr protein]-L-serine + ATP = [HPr protein]-O-phospho-L-serine + ADP + H(+). It carries out the reaction [HPr protein]-O-phospho-L-serine + phosphate + H(+) = [HPr protein]-L-serine + diphosphate. Functionally, catalyzes the ATP- as well as the pyrophosphate-dependent phosphorylation of a specific serine residue in HPr, a phosphocarrier protein of the phosphoenolpyruvate-dependent sugar phosphotransferase system (PTS). HprK/P also catalyzes the pyrophosphate-producing, inorganic phosphate-dependent dephosphorylation (phosphorolysis) of seryl-phosphorylated HPr (P-Ser-HPr). The two antagonistic activities of HprK/P are regulated by several intracellular metabolites, which change their concentration in response to the absence or presence of rapidly metabolisable carbon sources (glucose, fructose, etc.) in the growth medium. Therefore, by controlling the phosphorylation state of HPr, HPrK/P is a sensor enzyme that plays a major role in the regulation of carbon metabolism and sugar transport: it mediates carbon catabolite repression (CCR), and regulates PTS-catalyzed carbohydrate uptake and inducer exclusion. The protein is HPr kinase/phosphorylase of Streptococcus pneumoniae (strain 70585).